Reading from the N-terminus, the 168-residue chain is Diphosphoinositol polyphosphate phosphohydrolase 1 (168 aa).

M1 is modified (N-acetylmethionine). Substrate is bound by residues R10, 18-20, and 39-41; these read KKR and SSR. In terms of domain architecture, Nudix hydrolase spans 17–144; that stretch reads YKKRAACLCF…VQASYFETLR (128 aa). Residues G50 and E66 each contribute to the Mg(2+) site. Positions 51 to 72 match the Nudix box motif; the sequence is GGMEPEEEPSVAAVREVCEEAG. The active-site Proton acceptor is the E69. Residue E70 coordinates Mg(2+). Residues 89-91, R115, and K133 each bind substrate; that span reads RKH.

Belongs to the Nudix hydrolase family. DIPP subfamily. As to quaternary structure, monomer. It depends on Mg(2+) as a cofactor. Requires Mn(2+) as cofactor. The cofactor is Zn(2+). As to expression, present in heart, lung, liver and spleen (at protein level). Widely expressed.

It is found in the cytoplasm. The protein localises to the nucleus. The enzyme catalyses diphospho-myo-inositol polyphosphate + H2O = myo-inositol polyphosphate + phosphate.. It catalyses the reaction 5-diphospho-1D-myo-inositol 1,2,3,4,6-pentakisphosphate + H2O = 1D-myo-inositol hexakisphosphate + phosphate + H(+). It carries out the reaction 3,5-bis(diphospho)-1D-myo-inositol 1,2,4,6-tetrakisphosphate + H2O = 3-diphospho-1D-myo-inositol 1,2,4,5,6-pentakisphosphate + phosphate + 2 H(+). The catalysed reaction is [phosphate](n+1) + n H2O = (n+1) phosphate + n H(+). The enzyme catalyses P(1),P(5)-bis(5'-adenosyl) pentaphosphate + H2O = ADP + ATP + 2 H(+). It catalyses the reaction P(1),P(6)-bis(5'-adenosyl) hexaphosphate + H2O = 2 ATP + 2 H(+). It carries out the reaction P(1),P(4)-bis(5'-adenosyl) tetraphosphate + H2O = AMP + ATP + 2 H(+). The catalysed reaction is a 5'-end (N(7)-methyl 5'-triphosphoguanosine)-ribonucleoside in mRNA + H2O = N(7)-methyl-GMP + a 5'-end diphospho-ribonucleoside in mRNA + 2 H(+). The enzyme catalyses a 5'-end (N(7)-methyl 5'-triphosphoguanosine)-ribonucleoside in mRNA + H2O = N(7)-methyl-GDP + a 5'-end phospho-ribonucleoside in mRNA + 2 H(+). In terms of biological role, cleaves a beta-phosphate from the diphosphate groups in PP-InsP5 (diphosphoinositol pentakisphosphate) and [PP]2-InsP4 (bisdiphosphoinositol tetrakisphosphate), suggesting that it may play a role in signal transduction. InsP6 (inositol hexakisphosphate) is not a substrate. Also able to catalyze the hydrolysis of dinucleoside oligophosphates, with diadenosine 5',5'''-P1,P6-hexaphosphate (Ap6A) and diadenosine 5',5'''- P1,P5-pentaphosphate (Ap5A) being the preferred substrates. The major reaction products are ADP and p4a from Ap6A and ADP and ATP from Ap5A. Also able to hydrolyze 5- phosphoribose 1-diphosphate. Acts as a negative regulator of the ERK1/2 pathway. Acts as a decapping enzyme that can hydrolyze both monomethylated and unmethylated capped RNAs. Hydrolyzes monomethylated capped RNA after both the alpha- and beta-phosphates generating m7GMP + ppRNA and m7GDP + pRNA. Modulates the stability of a subset of mRNAs implicated in cell motility. Divalent cations zinc, magnesium and manganese determine its substrate specificity. Exhibits diphosphoinositol polyphosphate phosphohydrolase in the presence of magnesium ions, diadenosine hexaphosphate hydrolase activity in the presence of manganese ions and endopolyphosphatase activity in the presence of zinc ions. Plays an important role in limiting DNA damage and maintaining cell survival upon oxidative stress via its endopolyphosphatase activity. The chain is Diphosphoinositol polyphosphate phosphohydrolase 1 from Mus musculus (Mouse).